The sequence spans 370 residues: DNA polymerase IV (370 aa).

In terms of domain architecture, UmuC spans 14-198; the sequence is IIHIDMDAFF…LPIEKFYGVG (185 aa). Residues Asp-18 and Asp-116 each coordinate Mg(2+). The active site involves Glu-117.

Belongs to the DNA polymerase type-Y family. Monomer. It depends on Mg(2+) as a cofactor.

It is found in the cytoplasm. It catalyses the reaction DNA(n) + a 2'-deoxyribonucleoside 5'-triphosphate = DNA(n+1) + diphosphate. In terms of biological role, poorly processive, error-prone DNA polymerase involved in untargeted mutagenesis. Copies undamaged DNA at stalled replication forks, which arise in vivo from mismatched or misaligned primer ends. These misaligned primers can be extended by PolIV. Exhibits no 3'-5' exonuclease (proofreading) activity. May be involved in translesional synthesis, in conjunction with the beta clamp from PolIII. The polypeptide is DNA polymerase IV (Streptococcus mutans serotype c (strain ATCC 700610 / UA159)).